We begin with the raw amino-acid sequence, 378 residues long: MHDPLGNPVLRNARRIVVKVGSSLVTNEGRGLDAIAIGQWCEQLAALIKDGREVIMVSSGAIAEGMKRLGWSLRPKAIHELQAAAAVGQMGLVQMYETKLRENGIGSAQVLLTHADLADRERYLNARSTLLTLLQLGVVPVINENDTVVNDEIKFGDNDTLGALVANLVEADALIILTDQKGLYTADPRKDPAAQFVHEAKAGDAALEAMAGGAGSSIGRGGMITKILAAKRAAGSGASTVIAWGREPEALIRLTQGEAIGTLLVAQTQKTQARKQWMADHLQLRGSVTVDPGAASMVQVGGKSLLPIGMTGVQGDFSRGDVIAVKDADGVEIARGLANYSSAEARLICRKVSSEFEKLLGYTGESEMVHRTNLILSR.

Lysine 19 provides a ligand contact to ATP. Residues serine 59, aspartate 146, and asparagine 158 each contribute to the substrate site. Residue 178 to 179 (TD) coordinates ATP. A PUA domain is found at 285 to 363 (RGSVTVDPGA…SEFEKLLGYT (79 aa)).

It belongs to the glutamate 5-kinase family.

It localises to the cytoplasm. The enzyme catalyses L-glutamate + ATP = L-glutamyl 5-phosphate + ADP. Its pathway is amino-acid biosynthesis; L-proline biosynthesis; L-glutamate 5-semialdehyde from L-glutamate: step 1/2. Catalyzes the transfer of a phosphate group to glutamate to form L-glutamate 5-phosphate. The protein is Glutamate 5-kinase of Polaromonas naphthalenivorans (strain CJ2).